The following is a 255-amino-acid chain: 3-deoxy-manno-octulosonate cytidylyltransferase (255 aa).

This sequence belongs to the KdsB family.

It is found in the cytoplasm. The catalysed reaction is 3-deoxy-alpha-D-manno-oct-2-ulosonate + CTP = CMP-3-deoxy-beta-D-manno-octulosonate + diphosphate. The protein operates within nucleotide-sugar biosynthesis; CMP-3-deoxy-D-manno-octulosonate biosynthesis; CMP-3-deoxy-D-manno-octulosonate from 3-deoxy-D-manno-octulosonate and CTP: step 1/1. It functions in the pathway bacterial outer membrane biogenesis; lipopolysaccharide biosynthesis. Functionally, activates KDO (a required 8-carbon sugar) for incorporation into bacterial lipopolysaccharide in Gram-negative bacteria. This chain is 3-deoxy-manno-octulosonate cytidylyltransferase, found in Pelobacter propionicus (strain DSM 2379 / NBRC 103807 / OttBd1).